We begin with the raw amino-acid sequence, 516 residues long: Ribonuclease Y (516 aa).

A helical membrane pass occupies residues 1-21; sequence MLIKIVIACVITAIIVALIAW. The region spanning 206 to 269 is the KH domain; the sequence is TISVVQLPND…ETARIALEKL (64 aa). Residues 332–425 enclose the HD domain; the sequence is ALKHSIEVAI…VQAADTISAA (94 aa).

Belongs to the RNase Y family.

The protein resides in the cell membrane. Endoribonuclease that initiates mRNA decay. This chain is Ribonuclease Y, found in Lachnoclostridium phytofermentans (strain ATCC 700394 / DSM 18823 / ISDg) (Clostridium phytofermentans).